A 265-amino-acid chain; its full sequence is 3'(2'),5'-bisphosphate nucleotidase CysQ (265 aa).

Residues E80, D99, L101, D102, and D222 each contribute to the Mg(2+) site. A substrate-binding site is contributed by E80. Residues 101–104 and D222 each bind substrate; that span reads LDGT.

It belongs to the inositol monophosphatase superfamily. CysQ family. The cofactor is Mg(2+).

It is found in the cell inner membrane. It carries out the reaction adenosine 3',5'-bisphosphate + H2O = AMP + phosphate. In terms of biological role, converts adenosine-3',5'-bisphosphate (PAP) to AMP. The protein is 3'(2'),5'-bisphosphate nucleotidase CysQ of Buchnera aphidicola subsp. Acyrthosiphon pisum (strain APS) (Acyrthosiphon pisum symbiotic bacterium).